The primary structure comprises 392 residues: Sterol methyltransferase-like 3 (392 aa).

Residues 20–42 (VTPWQAAAGVTAAIFIGSYLWHS) traverse the membrane as a helical segment.

The protein belongs to the class I-like SAM-binding methyltransferase superfamily. Erg6/SMT family.

The protein localises to the microsome membrane. In terms of biological role, unable to convert squalene, botryococcene, cycloartenol, zymosterol or lanosterol to mono-, di-, tri- or tetramethylated derivatives. This chain is Sterol methyltransferase-like 3 (SMT-3), found in Botryococcus braunii (Green alga).